A 431-amino-acid chain; its full sequence is GDP-L-galactose phosphorylase 2 (431 aa).

His-235 acts as the Tele-GMP-histidine intermediate in catalysis. The segment covering 398-407 (EEEEEEELEE) has biased composition (acidic residues). Positions 398–417 (EEEEEEELEEQNSMNGGSFT) are disordered.

This sequence belongs to the GDPGP1 family. As to quaternary structure, interacts with TLP1. As to expression, expressed in leaves, stems, roots, flowers and siliques.

It localises to the cytoplasm. It is found in the nucleus. The enzyme catalyses GDP-beta-L-galactose + phosphate = beta-L-galactose 1-phosphate + GDP + H(+). It functions in the pathway cofactor biosynthesis; L-ascorbate biosynthesis via GDP-alpha-D-mannose pathway; L-ascorbate from GDP-alpha-D-mannose: step 2/5. Its function is as follows. Catalyzes a reaction of the Smirnoff-Wheeler pathway, the major route to ascorbate biosynthesis in plants. Acts as a phosphorylase rather than as a transferase. Uses preferentially GDP-L-galactose and GDP-D-glucose as substrates. Lower activity with GDP-L-fucose, very low activity with GDP-D-mannose, and no activity with UDP-D-glucose, UDP-D-galactose or ADP-D-glucose. Highly specific for inorganic phosphate as the guanylyl acceptor. This is GDP-L-galactose phosphorylase 2 (VTC5) from Arabidopsis thaliana (Mouse-ear cress).